The following is a 106-amino-acid chain: UPF0060 membrane protein Smed_0659 (106 aa).

The next 3 helical transmembrane spans lie at 4–24 (FAIY…FWAW), 31–51 (GLWL…LTMV), and 61–81 (AAYG…AEGA).

It belongs to the UPF0060 family.

The protein localises to the cell inner membrane. This is UPF0060 membrane protein Smed_0659 from Sinorhizobium medicae (strain WSM419) (Ensifer medicae).